A 242-amino-acid polypeptide reads, in one-letter code: Ribose-5-phosphate isomerase A (242 aa).

Substrate contacts are provided by residues Ser-39–Thr-42, Asp-95–Asp-98, and Lys-108–Gly-111. Glu-117 acts as the Proton acceptor in catalysis. A substrate-binding site is contributed by Lys-135.

This sequence belongs to the ribose 5-phosphate isomerase family. Homodimer.

It catalyses the reaction aldehydo-D-ribose 5-phosphate = D-ribulose 5-phosphate. Its pathway is carbohydrate degradation; pentose phosphate pathway; D-ribose 5-phosphate from D-ribulose 5-phosphate (non-oxidative stage): step 1/1. Its function is as follows. Catalyzes the reversible conversion of ribose-5-phosphate to ribulose 5-phosphate. In Chlamydia trachomatis serovar A (strain ATCC VR-571B / DSM 19440 / HAR-13), this protein is Ribose-5-phosphate isomerase A.